The chain runs to 312 residues: Glyoxylate/hydroxypyruvate reductase A (312 aa).

Arg227 is an active-site residue. The active-site Proton donor is the His275.

Belongs to the D-isomer specific 2-hydroxyacid dehydrogenase family. GhrA subfamily.

The protein resides in the cytoplasm. It catalyses the reaction glycolate + NADP(+) = glyoxylate + NADPH + H(+). It carries out the reaction (R)-glycerate + NAD(+) = 3-hydroxypyruvate + NADH + H(+). The catalysed reaction is (R)-glycerate + NADP(+) = 3-hydroxypyruvate + NADPH + H(+). Its function is as follows. Catalyzes the NADPH-dependent reduction of glyoxylate and hydroxypyruvate into glycolate and glycerate, respectively. The sequence is that of Glyoxylate/hydroxypyruvate reductase A from Salmonella dublin (strain CT_02021853).